A 354-amino-acid polypeptide reads, in one-letter code: Peptide chain release factor 1 (354 aa).

N5-methylglutamine is present on Q230.

It belongs to the prokaryotic/mitochondrial release factor family. Methylated by PrmC. Methylation increases the termination efficiency of RF1.

The protein localises to the cytoplasm. Its function is as follows. Peptide chain release factor 1 directs the termination of translation in response to the peptide chain termination codons UAG and UAA. The polypeptide is Peptide chain release factor 1 (Rhodospirillum rubrum (strain ATCC 11170 / ATH 1.1.1 / DSM 467 / LMG 4362 / NCIMB 8255 / S1)).